Reading from the N-terminus, the 907-residue chain is Isoleucine--tRNA ligase (907 aa).

Positions Pro57–Ser67 match the 'HIGH' region motif. Glu549 is a binding site for L-isoleucyl-5'-AMP. Positions Lys590 to Ser594 match the 'KMSKS' region motif. Residue Lys593 participates in ATP binding. Zn(2+)-binding residues include Cys867, Cys870, Cys889, and Cys892.

This sequence belongs to the class-I aminoacyl-tRNA synthetase family. IleS type 1 subfamily. In terms of assembly, monomer. The cofactor is Zn(2+).

It localises to the cytoplasm. The enzyme catalyses tRNA(Ile) + L-isoleucine + ATP = L-isoleucyl-tRNA(Ile) + AMP + diphosphate. In terms of biological role, catalyzes the attachment of isoleucine to tRNA(Ile). As IleRS can inadvertently accommodate and process structurally similar amino acids such as valine, to avoid such errors it has two additional distinct tRNA(Ile)-dependent editing activities. One activity is designated as 'pretransfer' editing and involves the hydrolysis of activated Val-AMP. The other activity is designated 'posttransfer' editing and involves deacylation of mischarged Val-tRNA(Ile). The chain is Isoleucine--tRNA ligase from Methylacidiphilum infernorum (isolate V4) (Methylokorus infernorum (strain V4)).